The primary structure comprises 78 residues: MAERPLDVIHRSLDKDVLVILKKGFEFRGKLIGYDIHLNIVLAGAEMIQDGEVVKKYGKIVIRGDNVLAISPVDVGVE.

Residues 4 to 76 enclose the Sm domain; the sequence is RPLDVIHRSL…VLAISPVDVG (73 aa).

The protein belongs to the snRNP Sm proteins family.

The protein is Putative snRNP Sm-like protein of Thermococcus onnurineus (strain NA1).